Reading from the N-terminus, the 858-residue chain is Volume-regulated anion channel subunit LRRC8D (858 aa).

The Cytoplasmic segment spans residues Met1 to Pro22. Residues Trp23–Thr48 traverse the membrane as a helical segment. Residues Lys49–Lys163 lie on the Extracellular side of the membrane. A disulfide bridge connects residues Cys54 and Cys354. The interval Ala118–Arg137 is disordered. Basic and acidic residues predominate over residues Glu126–Arg137. Residues Tyr164–Phe182 form a helical membrane-spanning segment. Residues Trp183–Tyr308 are Cytoplasmic-facing. Residues Ser221–Thr251 are disordered. The segment covering Arg227 to Thr251 has biased composition (polar residues). Ser241, Ser242, and Ser246 each carry phosphoserine. The chain crosses the membrane as a helical span at residues Val309–Val330. Over Asn331–Tyr360 the chain is Extracellular. A helical membrane pass occupies residues Met361–Trp386. Residues Leu387–Ile858 lie on the Cytoplasmic side of the membrane. LRR repeat units lie at residues Asn514–Phe534, His538–Leu559, Asn561–Glu582, His589–Val609, His612–Lys632, Asn636–Leu657, Asn659–Gln680, Arg684–Val705, Asn707–Leu728, Lys730–Leu751, Asn753–Cys774, Lys776–Leu797, and Gln799–Cys820.

This sequence belongs to the LRRC8 family. As to quaternary structure, heterohexamer; oligomerizes with other LRRC8 proteins (LRRC8A, LRRC8B, LRRC8C and/or LRRC8E) to form a heterohexamer. In vivo, the subunit composition may depend primarily on expression levels, and heterooligomeric channels containing various proportions of the different LRRC8 proteins may coexist.

It is found in the cell membrane. The protein localises to the endoplasmic reticulum membrane. It carries out the reaction chloride(in) = chloride(out). The catalysed reaction is iodide(out) = iodide(in). It catalyses the reaction taurine(out) = taurine(in). Non-essential component of the volume-regulated anion channel (VRAC, also named VSOAC channel), an anion channel required to maintain a constant cell volume in response to extracellular or intracellular osmotic changes. The VRAC channel conducts iodide better than chloride and can also conduct organic osmolytes like taurine. Plays a redundant role in the efflux of amino acids, such as aspartate, in response to osmotic stress. Channel activity requires LRRC8A plus at least one other family member (LRRC8B, LRRC8C, LRRC8D or LRRC8E); channel characteristics depend on the precise subunit composition. Also acts as a regulator of glucose-sensing in pancreatic beta cells: VRAC currents, generated in response to hypotonicity- or glucose-induced beta cell swelling, depolarize cells, thereby causing electrical excitation, leading to increase glucose sensitivity and insulin secretion. VRAC channels containing LRRC8D inhibit transport of immunoreactive cyclic dinucleotide GMP-AMP (2'-3'-cGAMP), an immune messenger produced in response to DNA virus in the cytosol. The chain is Volume-regulated anion channel subunit LRRC8D from Rattus norvegicus (Rat).